The following is a 449-amino-acid chain: uncharacterized protein (449 aa).

Disordered stretches follow at residues 1–58 (MVKR…SLSS) and 71–125 (EALE…VVEL). Positions 30–46 (KQRDELREKQKRKREDS) are enriched in basic and acidic residues. A compositionally biased stretch (acidic residues) spans 103–124 (SDDDDDDNEEEDDNGFEDQVVE).

The protein belongs to the bystin family.

This is an uncharacterized protein from Caenorhabditis elegans.